The primary structure comprises 153 residues: Ribosome maturation factor RimP (153 aa).

The protein belongs to the RimP family.

It is found in the cytoplasm. Functionally, required for maturation of 30S ribosomal subunits. The protein is Ribosome maturation factor RimP of Coxiella burnetii (strain Dugway 5J108-111).